A 332-amino-acid chain; its full sequence is Beta-ketoacyl-[acyl-carrier-protein] synthase III 5 (332 aa).

Residues cysteine 111 and histidine 253 contribute to the active site. Residues 254-258 (QANAR) are ACP-binding. The active site involves asparagine 283.

This sequence belongs to the thiolase-like superfamily. FabH family. Homodimer.

The protein resides in the cytoplasm. It carries out the reaction malonyl-[ACP] + acetyl-CoA + H(+) = 3-oxobutanoyl-[ACP] + CO2 + CoA. It participates in lipid metabolism; fatty acid biosynthesis. In terms of biological role, catalyzes the condensation reaction of fatty acid synthesis by the addition to an acyl acceptor of two carbons from malonyl-ACP. Catalyzes the first condensation reaction which initiates fatty acid synthesis and may therefore play a role in governing the total rate of fatty acid production. Possesses both acetoacetyl-ACP synthase and acetyl transacylase activities. Its substrate specificity determines the biosynthesis of branched-chain and/or straight-chain of fatty acids. In Streptomyces coelicolor (strain ATCC BAA-471 / A3(2) / M145), this protein is Beta-ketoacyl-[acyl-carrier-protein] synthase III 5.